We begin with the raw amino-acid sequence, 361 residues long: Putative geranylgeranyl pyrophosphate synthase 8, chloroplastic (361 aa).

The N-terminal 39 residues, 1 to 39 (MATTVHLSSFSLFIQSRGRRDNSISSVKSLKKRTGLSPS), are a transit peptide targeting the chloroplast. Residues 24–58 (ISSVKSLKKRTGLSPSSALTSQGGRDMIPPQGKSN) form a disordered region. Over residues 36–46 (LSPSSALTSQG) the composition is skewed to polar residues. K107, R110, and H139 together coordinate isopentenyl diphosphate. Mg(2+) contacts are provided by D146 and D152. Residue R157 participates in dimethylallyl diphosphate binding. R158 is an isopentenyl diphosphate binding site. Dimethylallyl diphosphate contacts are provided by K246, T247, Q284, K301, and K311.

It belongs to the FPP/GGPP synthase family. Monomer. It depends on Mg(2+) as a cofactor.

It is found in the plastid. The protein localises to the chloroplast. The enzyme catalyses isopentenyl diphosphate + dimethylallyl diphosphate = (2E)-geranyl diphosphate + diphosphate. The catalysed reaction is isopentenyl diphosphate + (2E)-geranyl diphosphate = (2E,6E)-farnesyl diphosphate + diphosphate. It carries out the reaction isopentenyl diphosphate + (2E,6E)-farnesyl diphosphate = (2E,6E,10E)-geranylgeranyl diphosphate + diphosphate. It functions in the pathway isoprenoid biosynthesis; farnesyl diphosphate biosynthesis; farnesyl diphosphate from geranyl diphosphate and isopentenyl diphosphate: step 1/1. Its pathway is isoprenoid biosynthesis; geranyl diphosphate biosynthesis; geranyl diphosphate from dimethylallyl diphosphate and isopentenyl diphosphate: step 1/1. The protein operates within isoprenoid biosynthesis; geranylgeranyl diphosphate biosynthesis; geranylgeranyl diphosphate from farnesyl diphosphate and isopentenyl diphosphate: step 1/1. Functionally, catalyzes the trans-addition of the three molecules of IPP onto DMAPP to form geranylgeranyl pyrophosphate. The protein is Putative geranylgeranyl pyrophosphate synthase 8, chloroplastic of Arabidopsis thaliana (Mouse-ear cress).